The primary structure comprises 205 residues: MSDFGNPLKKFKLVFLGEQSVGKTSLITRFMYDSFDNTYQATIGIDFLSKTMYLEDRTVRLQLWDTAGQERFRSLIPSYIRDSTVAVVVYDITNSNSFHQTSKWIDDVRTERGSDVIIMLVGNKTDLSDKRQVTTDEGERKAKELNVMFIETSAKAGYNVKQLFRRIAGALPGIIKDDPVEPPNVVTMDPIRQRQIVTDEGSCWC.

GTP contacts are provided by residues 18-25 (EQSVGKTS), threonine 42, 66-70 (TAGQE), and 124-127 (KTDL). Residues cysteine 203 and cysteine 205 are each lipidated (S-geranylgeranyl cysteine). Cysteine methyl ester is present on cysteine 205.

The protein belongs to the small GTPase superfamily. Rab family. In terms of assembly, interacts with GARP complex component vps-52. Interacts (in GTP-bound form) with lin-10. May interact (in GTP-bound form) with eat-17. Highly expressed in body wall muscles, pharyngeal and vulval muscles, hypodermis, intestine, the gonad, coelomocytes, and neurons, including command interneuron (at protein level). Highly expressed in the terminal bulb muscles.

The protein localises to the perikaryon. Its subcellular location is the cell projection. The protein resides in the dendrite. It is found in the golgi apparatus. It localises to the cytoplasmic vesicle. Functionally, the small GTPases Rab are key regulators of intracellular membrane trafficking, from the formation of transport vesicles to their fusion with membranes. Rabs cycle between an inactive GDP-bound form and an active GTP-bound form that is able to recruit to membranes different set of downstream effectors directly responsible for vesicle formation, movement, tethering and fusion. In its active GTP-bound form, acts redundantly with rab-6.1 (in its active GTP-bound form) to positively regulate the retrograde trafficking of cargo molecules from endosomes to the Golgi compartment. Required for the retrograde trafficking of glr-1, a subunit of AMPA-type glutamate receptors (AMPRs), out of early endosomes and into the Golgi compartment in neurons. Its role in glr-1 trafficking may partly be mediated by its interaction with lin-10 and association with components of the retromer complex such as rme-8. Together with rab-6.2, promotes the retrograde trafficking of mig-14 from endosomes to Golgi structures in the intestine. Plays a role in the epidermis to promote cuticle integrity and impermeability of the cuticle barrier to exogenous molecules. May have a role in the glycosylation of the cuticular surface. Required for seam cell division and alae formation. Required for grinder formation, which is the feeding organ that breaks down food. In contrast to rab-6.1, may play a minor role in the exocytosis of secretory vesicles (cortical granules) during the oocyte-to-embryo transition. The polypeptide is Ras-related protein rab-6.2 (Caenorhabditis elegans).